We begin with the raw amino-acid sequence, 1049 residues long: Presequence protease, mitochondrial (1049 aa).

Residues 1-39 (MLRSYLHLGRHRTPAFRQPLGRLLRPTASILQYAQSRTL) constitute a mitochondrion transit peptide. Residue histidine 113 coordinates Zn(2+). The active-site Proton acceptor is the glutamate 116. Residue histidine 117 participates in Zn(2+) binding. The active site involves glutamate 189. Position 222 (glutamate 222) interacts with Zn(2+).

Belongs to the peptidase M16 family. PreP subfamily. As to quaternary structure, monomer and homodimer; homodimerization is induced by binding of the substrate. The cofactor is Zn(2+).

Its subcellular location is the mitochondrion intermembrane space. It localises to the mitochondrion matrix. Functionally, degrades mitochondrial transit peptides after their cleavage in the intermembrane space or in the matrix, and presequence peptides; clearance of these peptides is required to keep the presequence processing machinery running. Preferentially cleaves the N-terminal side of paired basic amino acid residues. Also degrades other unstructured peptides. May function as an ATP-dependent peptidase as opposed to a metalloendopeptidase. The polypeptide is Presequence protease, mitochondrial (cym1) (Emericella nidulans (strain FGSC A4 / ATCC 38163 / CBS 112.46 / NRRL 194 / M139) (Aspergillus nidulans)).